A 124-amino-acid polypeptide reads, in one-letter code: Small polypeptide ROTUNDIFOLIA LIKE 3 (124 aa).

The interval 1-25 (MEDERWKLSSSKGRSKSGRSCSSSS) is disordered. 2 N-linked (GlcNAc...) asparagine glycosylation sites follow: Asn35 and Asn38. A helical transmembrane segment spans residues 59–75 (AWSAAGAGGGGASSSSS). The tract at residues 60–95 (WSAAGAGGGGASSSSSSQHQHQQQQQQSNNSQRLSK) is disordered. The segment covering 71–91 (SSSSSSQHQHQQQQQQSNNSQ) has biased composition (low complexity). Asn88 carries an N-linked (GlcNAc...) asparagine glycan. Positions 92–124 (RLSKKCVEAVKEHRARFYIVRRCVSMLVCWRDY) are required for DVL/RTFL small polypeptide activity.

The protein belongs to the DVL/RTFL small polypeptides family.

The protein resides in the cell membrane. Small polypeptide acting as a regulatory molecule which coordinates cellular responses required for differentiation, growth and development, probably by restricting polar cell proliferation in lateral organs (e.g. leaves and petioles). In Oryza sativa subsp. indica (Rice), this protein is Small polypeptide ROTUNDIFOLIA LIKE 3.